Here is a 126-residue protein sequence, read N- to C-terminus: MIRTMLQGKLHRVKVTQADLHYEGSCAIDQDFLEAAGILEYEAIDIYNVDNGQRFSTYAIAAERGSRIISVNGAAARCACVGDKLIICSYVQMSYAAARLHHPKVAYFEGENQLQRKAKAVPVQVA.

The active-site Schiff-base intermediate with substrate; via pyruvic acid is the serine 25. Pyruvic acid (Ser) is present on serine 25. A substrate-binding site is contributed by threonine 57. The active-site Proton donor is the tyrosine 58. Position 73–75 (73–75 (GAA)) interacts with substrate.

The protein belongs to the PanD family. Heterooctamer of four alpha and four beta subunits. Pyruvate serves as cofactor. Is synthesized initially as an inactive proenzyme, which is activated by self-cleavage at a specific serine bond to produce a beta-subunit with a hydroxyl group at its C-terminus and an alpha-subunit with a pyruvoyl group at its N-terminus.

The protein resides in the cytoplasm. It catalyses the reaction L-aspartate + H(+) = beta-alanine + CO2. The protein operates within cofactor biosynthesis; (R)-pantothenate biosynthesis; beta-alanine from L-aspartate: step 1/1. Its function is as follows. Catalyzes the pyruvoyl-dependent decarboxylation of aspartate to produce beta-alanine. The chain is Aspartate 1-decarboxylase from Yersinia pestis bv. Antiqua (strain Antiqua).